A 64-amino-acid chain; its full sequence is Carnocyclin-A (64 aa).

Positions 1–4 (MLYE) are excised as a propeptide. The segment at residues 5–64 (LVAYGIAQGTAEKVVSLINAGLTVGSIISILGGVTVGLSGVFTAVKAAIAKQGIKKAIQL) is a cross-link (cyclopeptide (Leu-Leu)).

The protein localises to the secreted. In terms of biological role, cyclopeptide antibiotic that inhibits the growth of Gram-positive bacteria, but has no effect on the growth of Gram-negative bacteria. This is Carnocyclin-A from Carnobacterium maltaromaticum (Carnobacterium piscicola).